Reading from the N-terminus, the 103-residue chain is Large ribosomal subunit protein uL24 (103 aa).

Belongs to the universal ribosomal protein uL24 family. Part of the 50S ribosomal subunit.

Functionally, one of two assembly initiator proteins, it binds directly to the 5'-end of the 23S rRNA, where it nucleates assembly of the 50S subunit. Its function is as follows. One of the proteins that surrounds the polypeptide exit tunnel on the outside of the subunit. The polypeptide is Large ribosomal subunit protein uL24 (Lacticaseibacillus casei (strain BL23) (Lactobacillus casei)).